Consider the following 82-residue polypeptide: Costars family protein v1g158749 (82 aa).

Belongs to the costars family.

The protein is Costars family protein v1g158749 of Nematostella vectensis (Starlet sea anemone).